A 392-amino-acid chain; its full sequence is Formate-dependent phosphoribosylglycinamide formyltransferase (392 aa).

Residues 20 to 21 and E80 contribute to the N(1)-(5-phospho-beta-D-ribosyl)glycinamide site; that span reads EL. ATP is bound by residues R112, K153, 158–163, 193–196, and E201; these read SSGKGQ and EGFV. The region spanning 117 to 306 is the ATP-grasp domain; that stretch reads RLAAETLGLP…EFALHVRAIL (190 aa). Mg(2+) is bound by residues E265 and E277. Residues D284, K355, and 362 to 363 contribute to the N(1)-(5-phospho-beta-D-ribosyl)glycinamide site; that span reads RR.

It belongs to the PurK/PurT family. Homodimer.

The catalysed reaction is N(1)-(5-phospho-beta-D-ribosyl)glycinamide + formate + ATP = N(2)-formyl-N(1)-(5-phospho-beta-D-ribosyl)glycinamide + ADP + phosphate + H(+). It functions in the pathway purine metabolism; IMP biosynthesis via de novo pathway; N(2)-formyl-N(1)-(5-phospho-D-ribosyl)glycinamide from N(1)-(5-phospho-D-ribosyl)glycinamide (formate route): step 1/1. Its function is as follows. Involved in the de novo purine biosynthesis. Catalyzes the transfer of formate to 5-phospho-ribosyl-glycinamide (GAR), producing 5-phospho-ribosyl-N-formylglycinamide (FGAR). Formate is provided by PurU via hydrolysis of 10-formyl-tetrahydrofolate. This chain is Formate-dependent phosphoribosylglycinamide formyltransferase, found in Aeromonas hydrophila subsp. hydrophila (strain ATCC 7966 / DSM 30187 / BCRC 13018 / CCUG 14551 / JCM 1027 / KCTC 2358 / NCIMB 9240 / NCTC 8049).